Reading from the N-terminus, the 363-residue chain is Glutamate 5-kinase (363 aa).

K6 provides a ligand contact to ATP. Substrate contacts are provided by S46, D133, and N145. ATP is bound by residues 165–166 (TD) and 207–213 (TGGMHTK). A PUA domain is found at 271-349 (TGRLLLDEGA…RDIEAVLGFT (79 aa)).

This sequence belongs to the glutamate 5-kinase family.

The protein resides in the cytoplasm. It catalyses the reaction L-glutamate + ATP = L-glutamyl 5-phosphate + ADP. It participates in amino-acid biosynthesis; L-proline biosynthesis; L-glutamate 5-semialdehyde from L-glutamate: step 1/2. Its function is as follows. Catalyzes the transfer of a phosphate group to glutamate to form L-glutamate 5-phosphate. In Deinococcus geothermalis (strain DSM 11300 / CIP 105573 / AG-3a), this protein is Glutamate 5-kinase.